We begin with the raw amino-acid sequence, 784 residues long: Cadherin-5 (784 aa).

The first 25 residues, 1-25 (MQRLMMLLATSGACLGLLAVAAVAA), serve as a signal peptide directing secretion. The propeptide occupies 26–47 (AGANPAQRDTHSLLPTHRRQKR). 5 consecutive Cadherin domains span residues 48–151 (DWIW…WPVF), 152–258 (THRL…FPFF), 259–372 (TQTK…PPIF), 373–477 (QQPF…DNAP), and 478–593 (EFAK…MAAQ). The Extracellular portion of the chain corresponds to 48–599 (DWIWNQMHID…MAAQVGVSIQ (552 aa)). Positions 58 and 59 each coordinate Ca(2+). N-linked (GlcNAc...) (complex) asparagine glycosylation occurs at Asn61. Ca(2+) is bound by residues Asp109 and Glu111. Asn112 carries an N-linked (GlcNAc...) (complex) asparagine glycan. The Ca(2+) site is built by Asp143, Val144, Asn145, Asp146, and Asn147. N-linked (GlcNAc...) asparagine glycosylation is present at Asn157. Ca(2+)-binding residues include Asp177, Asp179, His186, and Asp231. N-linked (GlcNAc...) asparagine glycosylation occurs at Asn362. Asn442 is a glycosylation site (N-linked (GlcNAc...) (complex) asparagine). Asn523 and Asn535 each carry an N-linked (GlcNAc...) asparagine glycan. The helical transmembrane segment at 600 to 620 (AVVAILLCILTITVITLLIFL) threads the bilayer. The interval 621–660 (RRRLRKQARAHGKSVPEIHEQLVTYDEEGGGEMDTTSYDV) is required for interaction with PALS1. The Cytoplasmic segment spans residues 621–784 (RRRLRKQARA…GSDPREELLY (164 aa)).

Part of a complex composed of AMOTL2, MAGI1 and CDH5, within the complex AMOTL2 acts as a scaffold protein for the interaction of MAGI1 with CDH5. The complex is required for coupling actin fibers to cell junctions in endothelial cells. Within the complex AMOTL2 (via its N-terminus) interacts with CDH5. Interacts (via cadherin 5 domain) with PTPRB. Interacts with TRPC4. Interacts with KRIT1. Interacts with PARD3. Interacts with RTN4 (isoform B). Interacts with PALS1; the interaction promotes PALS1 localization to cell junctions and is required for CDH5-mediated vascular lumen formation and endothelial cell. Interacts with CTNND1/p120-catenin; the interaction controls CADH5 endocytosis. Phosphorylated on tyrosine residues by KDR/VEGFR-2. Dephosphorylated by PTPRB. In terms of processing, O-glycosylated. In terms of tissue distribution, expressed in endothelial cells (at protein level). Expressed in the brain.

It localises to the cell junction. Its subcellular location is the adherens junction. It is found in the cell membrane. The protein resides in the cytoplasm. Functionally, cadherins are calcium-dependent cell adhesion proteins. They preferentially interact with themselves in a homophilic manner in connecting cells; cadherins may thus contribute to the sorting of heterogeneous cell types. This cadherin may play a important role in endothelial cell biology through control of the cohesion and organization of the intercellular junctions. It associates with alpha-catenin forming a link to the cytoskeleton. Plays a role in coupling actin fibers to cell junctions in endothelial cells, via acting as a cell junctional complex anchor for AMOTL2 and MAGI1. Acts in concert with KRIT1 and PALS1 to establish and maintain correct endothelial cell polarity and vascular lumen. These effects are mediated by recruitment and activation of the Par polarity complex and RAP1B. Required for activation of PRKCZ and for the localization of phosphorylated PRKCZ, PARD3, TIAM1 and RAP1B to the cell junction. Associates with CTNND1/p120-catenin to control CADH5 endocytosis. The chain is Cadherin-5 from Homo sapiens (Human).